Here is a 153-residue protein sequence, read N- to C-terminus: Ribosome maturation factor RimP (153 aa).

Belongs to the RimP family.

It is found in the cytoplasm. Required for maturation of 30S ribosomal subunits. The sequence is that of Ribosome maturation factor RimP from Nostoc sp. (strain PCC 7120 / SAG 25.82 / UTEX 2576).